We begin with the raw amino-acid sequence, 378 residues long: GDP-mannose 3,5-epimerase 1 (378 aa).

NAD(+) contacts are provided by residues 36-62 (GAGGFIGSHIARRLKSEGHYIIASDWK), Asp-60, and Asp-80. Substrate-binding positions include Gly-105 and 145–147 (SAC). Tyr-175 and Lys-179 together coordinate NAD(+). The Proton acceptor role is filled by Tyr-175. Substrate-binding positions include Asn-204, 217-219 (EKA), Lys-226, 242-244 (QTR), Arg-307, and Ser-357.

This sequence belongs to the NAD(P)-dependent epimerase/dehydratase family. Homodimer. NAD(+) serves as cofactor.

The catalysed reaction is GDP-alpha-D-mannose = GDP-beta-L-gulose. It carries out the reaction GDP-beta-L-gulose = GDP-beta-L-galactose. It functions in the pathway cofactor biosynthesis; L-ascorbate biosynthesis via GDP-alpha-D-mannose pathway; L-ascorbate from GDP-alpha-D-mannose: step 1/5. Catalyzes a reversible epimerization of GDP-D-mannose that precedes the committed step in the biosynthesis of vitamin C (L-ascorbate), resulting in the hydrolysis of the highly energetic glycosyl-pyrophosphoryl linkage. Able to catalyze 2 distinct epimerization reactions and can release both GDP-L-galactose and GDP-L-gulose from GDP-mannose. The polypeptide is GDP-mannose 3,5-epimerase 1 (Oryza sativa subsp. indica (Rice)).